The chain runs to 179 residues: Macro domain-containing protein XAC3343 (179 aa).

Residues 1 to 175 (MRIEVWQGDI…AYQQALATQE (175 aa)) form the Macro domain.

Belongs to the MacroD-type family.

The sequence is that of Macro domain-containing protein XAC3343 from Xanthomonas axonopodis pv. citri (strain 306).